Reading from the N-terminus, the 392-residue chain is Branched-chain-amino-acid aminotransferase, mitochondrial (392 aa).

A mitochondrion-targeting transit peptide spans 1 to 27 (MAAAALGQIWARKLLSVPWLLCGPRRY). Tyrosine 168 lines the substrate pocket. N6-(pyridoxal phosphate)lysine is present on lysine 229. The residue at position 321 (lysine 321) is an N6-acetyllysine.

This sequence belongs to the class-IV pyridoxal-phosphate-dependent aminotransferase family. In terms of assembly, homodimer. Pyridoxal 5'-phosphate is required as a cofactor. Ubiquitous.

It localises to the mitochondrion. It catalyses the reaction L-leucine + 2-oxoglutarate = 4-methyl-2-oxopentanoate + L-glutamate. The catalysed reaction is L-isoleucine + 2-oxoglutarate = (S)-3-methyl-2-oxopentanoate + L-glutamate. The enzyme catalyses L-valine + 2-oxoglutarate = 3-methyl-2-oxobutanoate + L-glutamate. Its function is as follows. Catalyzes the first reaction in the catabolism of the essential branched chain amino acids leucine, isoleucine, and valine. May also function as a transporter of branched chain alpha-keto acids. This Homo sapiens (Human) protein is Branched-chain-amino-acid aminotransferase, mitochondrial (BCAT2).